The chain runs to 1394 residues: Coiled-coil domain-containing protein 7 (1394 aa).

Positions 308–340 (LLDAEYKQIQRDFELLSEEKLVLENELQKLKDT) form a coiled coil. The disordered stretch occupies residues 345 to 375 (STNNRTKKAAKTVKKKDKGKSEDSEKKMSSE). A compositionally biased stretch (basic residues) spans 349-362 (RTKKAAKTVKKKDK). The segment covering 363–375 (GKSEDSEKKMSSE) has biased composition (basic and acidic residues). Residues 383-421 (LDQVQKVARLEIENKVLQEQLKQALQEAEKAKHQLNYFL) adopt a coiled-coil conformation. Disordered regions lie at residues 431 to 617 (EGKT…EVPD), 634 to 806 (EQMK…LEHQ), and 819 to 842 (NEKL…PMLK). The segment covering 437–446 (TMRVGNSQTE) has biased composition (polar residues). Residues 447 to 462 (VKGEDSKTIPLEKETG) are compositionally biased toward basic and acidic residues. Over residues 464–473 (SLVSDSGGQK) the composition is skewed to polar residues. Residues 491–500 (LIEKSSEKKR) show a composition bias toward basic and acidic residues. 3 stretches are compositionally biased toward polar residues: residues 503–513 (PAISDLSQILK), 521–538 (LESS…NKSP), and 546–571 (LTTV…NETV). Residues 583–600 (ESKKADVSEEQLQKKTEE) are compositionally biased toward basic and acidic residues. Over residues 663–679 (SRSQSETKNLEATGNES) the composition is skewed to polar residues. The span at 695-707 (QDTKSKTEVEVKK) shows a compositional bias: basic and acidic residues. Residues 711–721 (FQDNQLNTHNE) show a composition bias toward polar residues. The span at 722 to 736 (VPNERLIVEHQESMS) shows a compositional bias: basic and acidic residues. Residues 780-790 (KEQSTLKGQRI) show a composition bias toward polar residues. 2 stretches are compositionally biased toward basic and acidic residues: residues 791 to 806 (TTHE…LEHQ) and 830 to 842 (THGE…PMLK).

In terms of biological role, may play a role in tumorigenesis. The sequence is that of Coiled-coil domain-containing protein 7 (CCDC7) from Macaca fascicularis (Crab-eating macaque).